The following is a 216-amino-acid chain: MRTHPDFPNLFILDHPLIQHKLSHMRDRQRSTMGFRQLLKEIALLMGYEITRDLPLTTEAIETPLCTMDAPVIEGKKLAIVPILRAGLIMAEGLLELVPAAREGHIGLYRDHDTKMPVEYLVKLPDPAGRRFILVDPMLATGNSAVHAVDVLNRNGVLDAQIRFMALVAAPEGVRTFHAAHPTVPVFTAGLDSHLNPNAYIVPGLGDAGDRLFGTK.

5-phospho-alpha-D-ribose 1-diphosphate contacts are provided by residues Arg-85, Arg-110, and 136-144; that span reads DPMLATGNS. Uracil is bound by residues Ile-201 and 206-208; that span reads GDA. 5-phospho-alpha-D-ribose 1-diphosphate is bound at residue Asp-207.

The protein belongs to the UPRTase family. Mg(2+) serves as cofactor.

The enzyme catalyses UMP + diphosphate = 5-phospho-alpha-D-ribose 1-diphosphate + uracil. The protein operates within pyrimidine metabolism; UMP biosynthesis via salvage pathway; UMP from uracil: step 1/1. With respect to regulation, allosterically activated by GTP. Its function is as follows. Catalyzes the conversion of uracil and 5-phospho-alpha-D-ribose 1-diphosphate (PRPP) to UMP and diphosphate. This Rhodospirillum centenum (strain ATCC 51521 / SW) protein is Uracil phosphoribosyltransferase.